Reading from the N-terminus, the 272-residue chain is tRNA pseudouridine synthase A (272 aa).

The active-site Nucleophile is the D52. A substrate-binding site is contributed by Y110.

This sequence belongs to the tRNA pseudouridine synthase TruA family. In terms of assembly, homodimer.

It carries out the reaction uridine(38/39/40) in tRNA = pseudouridine(38/39/40) in tRNA. Formation of pseudouridine at positions 38, 39 and 40 in the anticodon stem and loop of transfer RNAs. In Cupriavidus taiwanensis (strain DSM 17343 / BCRC 17206 / CCUG 44338 / CIP 107171 / LMG 19424 / R1) (Ralstonia taiwanensis (strain LMG 19424)), this protein is tRNA pseudouridine synthase A.